Here is a 360-residue protein sequence, read N- to C-terminus: Photosystem II protein D1 2 (360 aa).

Residues 1 to 31 (MTTTLQQRESASLWEQFCQWVTSTNNRIYVG) are Cytoplasmic-facing. The helical transmembrane segment at 32–53 (WFGTLMIPTLLTATTCFIIAFI) threads the bilayer. Over 54-110 (AAPPVDIDGIREPVAGSLLYGNNIISGAVVPSSNAIGLHFYPIWEAASLDEWLYNGG) the chain is Lumenal, thylakoid. A helical transmembrane segment spans residues 111–134 (PYQLVVFHFLIGIFCYMGRQWELS). Histidine 118 is a binding site for chlorophyll a. Tyrosine 126 contributes to the pheophytin a binding site. Residues 135 to 142 (YRLGMRPW) lie on the Cytoplasmic side of the membrane. A helical membrane pass occupies residues 143-161 (ICVAYSAPVSAATAVFLIY). Tyrosine 147 is a binding site for pheophytin a. Residues 162–191 (PIGQGSFSDGMPLGISGTFNFMIVFQAEHN) are Lumenal, thylakoid-facing. Positions 170 and 189 each coordinate [CaMn4O5] cluster. Residues 192-218 (ILMHPFHMLGVAGVFGGSLFSAMHGSL) form a helical membrane-spanning segment. A chlorophyll a-binding site is contributed by histidine 198. A quinone contacts are provided by histidine 215, serine 264, and phenylalanine 265. A Fe cation-binding site is contributed by histidine 215. The Cytoplasmic segment spans residues 219–270 (VTSSLVRETTEVESQNYGYKFGQEEETYNIVAAHGYFGRLIFQYASFNNSRS). The chain crosses the membrane as a helical span at residues 271–295 (LHFFLGAWPVIGIWFTAMGVSTMAF). Histidine 272 lines the Fe cation pocket. Residues 296–360 (NLNGFNFNQS…VALTAPAVNG (65 aa)) lie on the Lumenal, thylakoid side of the membrane. Residues histidine 332, glutamate 333, histidine 337, aspartate 342, and alanine 344 each contribute to the [CaMn4O5] cluster site. Residues 345 to 360 (SGEQAPVALTAPAVNG) constitute a propeptide that is removed on maturation.

This sequence belongs to the reaction center PufL/M/PsbA/D family. As to quaternary structure, PSII is composed of 1 copy each of membrane proteins PsbA, PsbB, PsbC, PsbD, PsbE, PsbF, PsbH, PsbI, PsbJ, PsbK, PsbL, PsbM, PsbT, PsbX, PsbY, PsbZ, Psb30/Ycf12, peripheral proteins PsbO, CyanoQ (PsbQ), PsbU, PsbV and a large number of cofactors. It forms dimeric complexes. The cofactor is The D1/D2 heterodimer binds P680, chlorophylls that are the primary electron donor of PSII, and subsequent electron acceptors. It shares a non-heme iron and each subunit binds pheophytin, quinone, additional chlorophylls, carotenoids and lipids. D1 provides most of the ligands for the Mn4-Ca-O5 cluster of the oxygen-evolving complex (OEC). There is also a Cl(-1) ion associated with D1 and D2, which is required for oxygen evolution. The PSII complex binds additional chlorophylls, carotenoids and specific lipids.. C-terminally processed by CtpA; processing is essential to allow assembly of the oxygen-evolving complex and photosynthetic growth. In terms of processing, tyr-161 forms a radical intermediate that is referred to as redox-active TyrZ, YZ or Y-Z.

Its subcellular location is the cellular thylakoid membrane. It catalyses the reaction 2 a plastoquinone + 4 hnu + 2 H2O = 2 a plastoquinol + O2. Photosystem II (PSII) is a light-driven water:plastoquinone oxidoreductase that uses light energy to abstract electrons from H(2)O, generating O(2) and a proton gradient subsequently used for ATP formation. It consists of a core antenna complex that captures photons, and an electron transfer chain that converts photonic excitation into a charge separation. The D1/D2 (PsbA/PsbD) reaction center heterodimer binds P680, the primary electron donor of PSII as well as several subsequent electron acceptors. The protein is Photosystem II protein D1 2 of Synechocystis sp. (strain ATCC 27184 / PCC 6803 / Kazusa).